The chain runs to 317 residues: Dehydrogenase/reductase SDR family member 12 (317 aa).

Positions 50 and 52 each coordinate NAD(+). Residue serine 175 coordinates substrate. 3 residues coordinate NAD(+): tyrosine 201, lysine 205, and threonine 234. Residue tyrosine 201 is the Proton acceptor of the active site.

This sequence belongs to the short-chain dehydrogenases/reductases (SDR) family.

Putative oxidoreductase. The polypeptide is Dehydrogenase/reductase SDR family member 12 (Homo sapiens (Human)).